The following is a 261-amino-acid chain: 3-methyl-2-oxobutanoate hydroxymethyltransferase (261 aa).

Positions 44 and 83 each coordinate Mg(2+). Residues Asp44–Ser45, Asp83, and Lys113 each bind 3-methyl-2-oxobutanoate. Glu115 contacts Mg(2+). Glu183 acts as the Proton acceptor in catalysis.

The protein belongs to the PanB family. In terms of assembly, homodecamer; pentamer of dimers. The cofactor is Mg(2+).

Its subcellular location is the cytoplasm. It carries out the reaction 3-methyl-2-oxobutanoate + (6R)-5,10-methylene-5,6,7,8-tetrahydrofolate + H2O = 2-dehydropantoate + (6S)-5,6,7,8-tetrahydrofolate. The protein operates within cofactor biosynthesis; (R)-pantothenate biosynthesis; (R)-pantoate from 3-methyl-2-oxobutanoate: step 1/2. Catalyzes the reversible reaction in which hydroxymethyl group from 5,10-methylenetetrahydrofolate is transferred onto alpha-ketoisovalerate to form ketopantoate. The sequence is that of 3-methyl-2-oxobutanoate hydroxymethyltransferase from Cyanothece sp. (strain PCC 7425 / ATCC 29141).